The following is a 458-amino-acid chain: NADH-quinone oxidoreductase subunit N (458 aa).

A run of 14 helical transmembrane segments spans residues 2–22 (LLLLPEITLTLIALLGQCFAL), 30–50 (IIYNIVILLCIISIFLTFKYS), 71–91 (IILLFTIVSLIIYRDYSILVG), 93–113 (TLKFEFITLMLLSIVGIFVAI), 118–138 (FLLLFCGMELTALTSYALAGF), 153–173 (FILGSLVSCLSLFGISFIYGF), 196–216 (LIIGIVLFLSSIFFKLASSPL), 235–255 (FTAASKIGMVIVLLNISKLII), 261–281 (INYNLIKIIAILSMLFGAFGA), 290–310 (LMAYSTILNIGYVLIGVLLHN), 319–339 (LYILIYAVVSIGFFTCLIMLF), 361–381 (IAALISIVMFSMIGIPPLTGF), 397–417 (FTLAYCGIFTSVVAAFYYLKV), and 438–458 (LLLINYLVLGFLLFGSFIILF).

It belongs to the complex I subunit 2 family. NDH-1 is composed of 14 different subunits. Subunits NuoA, H, J, K, L, M, N constitute the membrane sector of the complex.

Its subcellular location is the cell inner membrane. The catalysed reaction is a quinone + NADH + 5 H(+)(in) = a quinol + NAD(+) + 4 H(+)(out). NDH-1 shuttles electrons from NADH, via FMN and iron-sulfur (Fe-S) centers, to quinones in the respiratory chain. The immediate electron acceptor for the enzyme in this species is believed to be ubiquinone. Couples the redox reaction to proton translocation (for every two electrons transferred, four hydrogen ions are translocated across the cytoplasmic membrane), and thus conserves the redox energy in a proton gradient. This is NADH-quinone oxidoreductase subunit N from Rickettsia prowazekii (strain Madrid E).